A 269-amino-acid chain; its full sequence is Acyl-CoA-binding domain-containing protein 4 (269 aa).

Residues 12-101 (CQKQFQAAVS…MKLVAQKVID (90 aa)) form the ACB domain. An acyl-CoA is bound by residues 23 to 32 (IQNLPKNGSY), 43 to 47 (YSYYK), K69, and Y88. 3 disordered regions span residues 150–175 (GAVSEPPCLPKEPAPPSPESHSPRDL), 195–226 (EQRAASGEKRDPRNSPVPPTEKEAAAQAQCSA), and 248–269 (VALPNVSDPKEVTVSGGVSAAN). The segment covering 156-167 (PCLPKEPAPPSP) has biased composition (pro residues). A phosphoserine mark is found at S166 and S171.

In terms of biological role, binds medium- and long-chain acyl-CoA esters and may function as an intracellular carrier of acyl-CoA esters. This chain is Acyl-CoA-binding domain-containing protein 4 (ACBD4), found in Pongo abelii (Sumatran orangutan).